The primary structure comprises 296 residues: Ribosomal RNA small subunit methyltransferase A (296 aa).

S-adenosyl-L-methionine-binding residues include N30, L32, G57, E78, D103, and N128.

Belongs to the class I-like SAM-binding methyltransferase superfamily. rRNA adenine N(6)-methyltransferase family. RsmA subfamily.

It localises to the cytoplasm. The catalysed reaction is adenosine(1518)/adenosine(1519) in 16S rRNA + 4 S-adenosyl-L-methionine = N(6)-dimethyladenosine(1518)/N(6)-dimethyladenosine(1519) in 16S rRNA + 4 S-adenosyl-L-homocysteine + 4 H(+). Functionally, specifically dimethylates two adjacent adenosines (A1518 and A1519) in the loop of a conserved hairpin near the 3'-end of 16S rRNA in the 30S particle. May play a critical role in biogenesis of 30S subunits. This Staphylococcus epidermidis (strain ATCC 35984 / DSM 28319 / BCRC 17069 / CCUG 31568 / BM 3577 / RP62A) protein is Ribosomal RNA small subunit methyltransferase A.